Reading from the N-terminus, the 317-residue chain is Olfactory receptor 6Q1 (317 aa).

The Extracellular portion of the chain corresponds to 1-27; sequence MQPYTKNWTQVTEFVMMGFAGIHEAHL. An N-linked (GlcNAc...) asparagine glycan is attached at asparagine 7. The chain crosses the membrane as a helical span at residues 28–48; it reads LFFILFLTMYLFTLVENLAII. Topologically, residues 49–56 are cytoplasmic; it reads LVVGLDHR. A helical membrane pass occupies residues 57-77; sequence LRRPMYFFLTHLSCLEIWYTS. Residues 78-103 are Extracellular-facing; the sequence is VTVPKMLAGFIGVDGGKNISYADCLS. An N-linked (GlcNAc...) asparagine glycan is attached at asparagine 95. A disulfide bond links cysteine 101 and cysteine 193. A helical membrane pass occupies residues 104–124; that stretch reads QLFIFTFLGATECFLLAAMAY. Over 125–143 the chain is Cytoplasmic; the sequence is DRYVAICMPLHYGAFVSWG. Residues 144-164 traverse the membrane as a helical segment; that stretch reads TCIRLAAACWLVGFLTPILPI. Topologically, residues 165-201 are extracellular; that stretch reads YLLSQLTFYGPNVIDHFSCDASPLLALSCSDVTWKET. A helical transmembrane segment spans residues 202 to 221; sequence VDFLVSLAVLLASSMVIAVS. The Cytoplasmic segment spans residues 222 to 241; the sequence is YGNIVWTLLHIRSAAERWKA. The helical transmembrane segment at 242-262 threads the bilayer; it reads FSTCAAHLTVVSLFYGTLFFM. Topologically, residues 263-275 are extracellular; sequence YVQTKVTSSINFN. The helical transmembrane segment at 276-296 threads the bilayer; the sequence is KVVSVFYSVVTPMLNPLIYSL. Residues 297–317 are Cytoplasmic-facing; that stretch reads RNKEVKGALGRVFSLNFWKGQ.

The protein belongs to the G-protein coupled receptor 1 family.

Its subcellular location is the cell membrane. Functionally, odorant receptor. In Homo sapiens (Human), this protein is Olfactory receptor 6Q1 (OR6Q1).